The sequence spans 417 residues: Inhibitor of growth protein 3 (417 aa).

Disordered stretches follow at residues 126 to 165 (LDTP…SEKK), 177 to 198 (SDAS…STNN), and 284 to 320 (QTLT…SSSL). Basic residues predominate over residues 136–152 (HHVHSHSLGEKRKHNPS). Positions 156–165 (STTDHVSEKK) are enriched in basic and acidic residues. Residues 177–187 (SDASKENTAGC) are compositionally biased toward polar residues. Low complexity-rich tracts occupy residues 189-198 (NNLSSSSTNN), 284-294 (QTLTSSATTDS), and 303-320 (NNKS…SSSL). Residues 359-408 (PRYCICNQVSYGEMVGCDNQDCPIEWFHYGCVGLSEAPKGKWYCPQCTAA) form a PHD-type zinc finger. Positions 362, 364, 375, 380, 386, 389, 402, and 405 each coordinate Zn(2+).

This sequence belongs to the ING family. Interacts with H3K4me3 and to a lesser extent with H3K4me2. Component of the NuA4 histone acetyltransferase complex.

The protein localises to the nucleus. Functionally, component of the NuA4 histone acetyltransferase (HAT) complex which is involved in transcriptional activation of select genes principally by acetylation of nucleosomal histone H4 and H2A. This modification may both alter nucleosome - DNA interactions and promote interaction of the modified histones with other proteins which positively regulate transcription. NuA4 may also play a direct role in DNA repair when directly recruited to sites of DNA damage. The sequence is that of Inhibitor of growth protein 3 (ing3) from Xenopus tropicalis (Western clawed frog).